Reading from the N-terminus, the 636-residue chain is MINITLPDDSIKSFKEYPKGMDVARGISEGFARNCVAMEIDGQLLDLDVEIRNDCAVRLITTRDAEAVEILRHSAAHVMAEAVQNLHADAKLTIGPVVEDGFYYDIDMAPISDADFPKIEAEMAKIVKAKKPFQRSEITKQEALELFKDNPYKVELINGLDDQTISIYQQGDFVDLCRGPHIPHTGMIKGLKLMKTSGAYWRADQEKAQLQRLYGTAFFDKKELKAYLHLIEEAKKRDHRKIGTRMGLFSFHQEAAGMPFFHAKGMEMWNELLAYWRDEHRAAGYVETKTPVMMSRHLWEKSGHWENYRENMYTSVVDGEEYAIKPMNCPGGMLLYKTESHSYRDLPLRAGEIGLVHRHELSGALSGLFRVRAFHQDDAHIFMTPEQIESEILGVLELVERIYSRFGLGFHLELSTRPKKSIGSDEQWAEATNGLKNALDKYGQPYAINEGDGAFYGPKIDIHIKDALGRTWQCGTVQLDMALPERFDLTYKGADNEKHRPIMIHRVIYGSIERFFGILVEHFAGKFPLWLAPVQAVVLPINDDLADHAQTVKKELESNGIRCDVDLRTESLKKKIREAQVNYVPLIITIGEKEKESGTLSVRTLDGKVRMGLSMADFIPPVLAHIRARQLDEDIL.

The TGS domain occupies 1–61 (MINITLPDDS…RNDCAVRLIT (61 aa)). The segment at 238–528 (DHRKIGTRMG…LVEHFAGKFP (291 aa)) is catalytic. Residues Cys329, His380, and His505 each contribute to the Zn(2+) site.

This sequence belongs to the class-II aminoacyl-tRNA synthetase family. As to quaternary structure, homodimer. Zn(2+) is required as a cofactor.

It is found in the cytoplasm. It carries out the reaction tRNA(Thr) + L-threonine + ATP = L-threonyl-tRNA(Thr) + AMP + diphosphate + H(+). Functionally, catalyzes the attachment of threonine to tRNA(Thr) in a two-step reaction: L-threonine is first activated by ATP to form Thr-AMP and then transferred to the acceptor end of tRNA(Thr). Also edits incorrectly charged L-seryl-tRNA(Thr). The chain is Threonine--tRNA ligase from Desulforapulum autotrophicum (strain ATCC 43914 / DSM 3382 / VKM B-1955 / HRM2) (Desulfobacterium autotrophicum).